We begin with the raw amino-acid sequence, 409 residues long: Cuticle-degrading serine protease (409 aa).

Residues 1–21 form the signal peptide; that stretch reads MLTNGLISLLAIAGLATNAFA. The propeptide occupies 22–123; sequence GPIRKVSNAG…VEQDTVVTTY (102 aa). In terms of domain architecture, Inhibitor I9 spans 39–122; it reads KYIVVLKKGL…YVEQDTVVTT (84 aa). One can recognise a Peptidase S8 domain in the interval 130-409; that stretch reads TWGLDRISHE…PNKIAYNGYA (280 aa). Asp164 (charge relay system) is an active-site residue. Asn178 carries N-linked (GlcNAc...) asparagine glycosylation. His200 functions as the Charge relay system in the catalytic mechanism. The N-linked (GlcNAc...) asparagine glycan is linked to Asn252. Ser353 serves as the catalytic Charge relay system.

It belongs to the peptidase S8 family.

It is found in the secreted. With respect to regulation, inhibited by PMSF, SSI, the peptide Phe-Val and by Phe, but not by EDTA. Hydrolyzes gelatin, casein, the chromogenic substrate azocoll and the cuticle of the nematode P.redivivus. Immobilizes P.redivivus. The sequence is that of Cuticle-degrading serine protease from Arthrobotrys oligospora (strain ATCC 24927 / CBS 115.81 / DSM 1491) (Nematode-trapping fungus).